Consider the following 87-residue polypeptide: Down syndrome critical region protein 10 (87 aa).

Expressed in placenta and testis.

The sequence is that of Down syndrome critical region protein 10 (DSCR10) from Homo sapiens (Human).